Consider the following 677-residue polypeptide: Methionine--tRNA ligase (677 aa).

Positions 15 to 25 (PYANGSIHLGH) match the 'HIGH' region motif. Zn(2+) is bound by residues Cys146, Cys149, Cys159, and Cys162. The 'KMSKS' region signature appears at 333 to 337 (KMSKS). Lys336 serves as a coordination point for ATP. Residues 575–677 (DFAKVDLRVA…AGAKPGHQVK (103 aa)) enclose the tRNA-binding domain.

It belongs to the class-I aminoacyl-tRNA synthetase family. MetG type 1 subfamily. In terms of assembly, homodimer. Zn(2+) is required as a cofactor.

The protein resides in the cytoplasm. The enzyme catalyses tRNA(Met) + L-methionine + ATP = L-methionyl-tRNA(Met) + AMP + diphosphate. Functionally, is required not only for elongation of protein synthesis but also for the initiation of all mRNA translation through initiator tRNA(fMet) aminoacylation. The protein is Methionine--tRNA ligase of Escherichia fergusonii (strain ATCC 35469 / DSM 13698 / CCUG 18766 / IAM 14443 / JCM 21226 / LMG 7866 / NBRC 102419 / NCTC 12128 / CDC 0568-73).